Here is a 204-residue protein sequence, read N- to C-terminus: Large ribosomal subunit protein eL15z (204 aa).

The segment at 161 to 204 is disordered; the sequence is LRGLTSEGKKNRGLRGKGHNNHKNRPSRRATWKKNNSLSLRRYR. A compositionally biased stretch (basic residues) spans 171–192; sequence NRGLRGKGHNNHKNRPSRRATW. The span at 193 to 204 shows a compositional bias: polar residues; that stretch reads KKNNSLSLRRYR.

The protein belongs to the eukaryotic ribosomal protein eL15 family.

The polypeptide is Large ribosomal subunit protein eL15z (RPL15A) (Arabidopsis thaliana (Mouse-ear cress)).